We begin with the raw amino-acid sequence, 91 residues long: Protein xpaR7 (91 aa).

The sequence is that of Protein xpaR7 (xpaR7) from Bacillus licheniformis.